The primary structure comprises 294 residues: Cytidine deaminase (294 aa).

CMP/dCMP-type deaminase domains follow at residues 48–168 and 186–294; these read DEDA…FGPK and LTGD…VLLG. 89–91 lines the substrate pocket; the sequence is NME. Position 102 (histidine 102) interacts with Zn(2+). The active-site Proton donor is the glutamate 104. Zn(2+) contacts are provided by cysteine 129 and cysteine 132.

Belongs to the cytidine and deoxycytidylate deaminase family. Homodimer. Zn(2+) serves as cofactor.

It catalyses the reaction cytidine + H2O + H(+) = uridine + NH4(+). The enzyme catalyses 2'-deoxycytidine + H2O + H(+) = 2'-deoxyuridine + NH4(+). This enzyme scavenges exogenous and endogenous cytidine and 2'-deoxycytidine for UMP synthesis. The protein is Cytidine deaminase of Salmonella paratyphi A (strain ATCC 9150 / SARB42).